We begin with the raw amino-acid sequence, 580 residues long: Negative elongation factor B (580 aa).

Lys519 is subject to N6-acetyllysine. Residues 552–580 form a disordered region; sequence DHRKPSPTQAAETPALDLPLPSVPAPATL. Residue Ser557 is modified to Phosphoserine.

It belongs to the NELF-B family. The NELF complex is composed of NELFA, NELFB, NELFCD and NELFE; the N-terminus of NELFB binds to the NELFA:NELFCD subcomplex. Binds RNA which may help to stabilize the NELF complex on nucleic acid Interacts with the first BRCT repeat of BRCA1. Interacts with KIAA1191. Isoform 1 and isoform 2 interact with NELFA, NELFCD and NELFE. Isoform 1 is expressed in the kidney, liver, adipose and lung. Isoform 2 is widely expressed.

It localises to the nucleus. Essential component of the NELF complex, a complex that negatively regulates the elongation of transcription by RNA polymerase II (Pol II). The NELF complex, which acts via an association with the DSIF complex and causes transcriptional pausing, is counteracted by the P-TEFb kinase complex. May be able to induce chromatin unfolding. Essential for early embryogenesis; plays an important role in maintaining the undifferentiated state of embryonic stem cells (ESCs) by preventing unscheduled expression of developmental genes. Plays a key role in establishing the responsiveness of stem cells to developmental cues; facilitates plasticity and cell fate commitment in ESCs by establishing the appropriate expression level of signaling molecules. Supports the transcription of genes involved in energy metabolism in cardiomyocytes; facilitates the association of transcription initiation factors with the promoters of the metabolism-related genes. This chain is Negative elongation factor B (Nelfb), found in Mus musculus (Mouse).